A 179-amino-acid polypeptide reads, in one-letter code: Replication restart protein DnaT (179 aa).

The disordered stretch occupies residues 156-179 (GGLPKRDVNTVSEPDSQIPPGFRG).

Belongs to the DnaT family. As to quaternary structure, homooligomerizes. Interacts with PriB. Component of the replication restart primosome. Primosome assembly occurs via a 'hand-off' mechanism. PriA binds to replication forks, subsequently PriB then DnaT bind; DnaT then displaces ssDNA to generate the helicase loading substrate.

Involved in the restart of stalled replication forks, which reloads the replicative helicase on sites other than the origin of replication. Can function in multiple replication restart pathways. Displaces ssDNA from a PriB-ssDNA complex. Probably forms a spiral filament on ssDNA. The sequence is that of Replication restart protein DnaT from Escherichia coli O7:K1 (strain IAI39 / ExPEC).